The primary structure comprises 123 residues: Small ribosomal subunit protein uS12 (123 aa).

Residue D89 is modified to 3-methylthioaspartic acid.

The protein belongs to the universal ribosomal protein uS12 family. As to quaternary structure, part of the 30S ribosomal subunit. Contacts proteins S8 and S17. May interact with IF1 in the 30S initiation complex.

Its function is as follows. With S4 and S5 plays an important role in translational accuracy. Functionally, interacts with and stabilizes bases of the 16S rRNA that are involved in tRNA selection in the A site and with the mRNA backbone. Located at the interface of the 30S and 50S subunits, it traverses the body of the 30S subunit contacting proteins on the other side and probably holding the rRNA structure together. The combined cluster of proteins S8, S12 and S17 appears to hold together the shoulder and platform of the 30S subunit. The polypeptide is Small ribosomal subunit protein uS12 (Granulibacter bethesdensis (strain ATCC BAA-1260 / CGDNIH1)).